Consider the following 304-residue polypeptide: MGKSLNNVPQAPLDVQFDSNDVKCSAYLYRPTTEVATPMIVMAHGLGGTRRMRLTAFAERFVAEGYACLVFDYRYFGDSEGQPRQLLDIKSQLEDWKAAIAYARSLDKIDPNRVVIWGTSFGGGHVLATAANDNRLAAVISQCPFTDGFSSSMAMNPITTLKLMGLALKDKIGSILGAKPVMVPLAAPSGHTALMNAPDAYSGYLALMPSGSNIPNYVAARFVLDIIRYYPGRKTSRIQAPVLFCVCDTDSVAPSKTTLRHASHTPNHEIKHYADGHFEIYVGEAFERVVRDQIDFLKRIVPVK.

Belongs to the AB hydrolase superfamily.

In terms of biological role, involved in quorum quenching (QQ). Inhibits motility and biofilm formation. Could contribute in bacterial competition, as it is capable of hydrolyzing the signaling molecules that mediate interspecies communication. The chain is Quorum-quenching protein AidA from Acinetobacter baumannii (strain MDR-ZJ06).